Here is a 236-residue protein sequence, read N- to C-terminus: Uridylate kinase (236 aa).

10-13 (KLSG) provides a ligand contact to ATP. A UMP-binding site is contributed by G52. ATP contacts are provided by G53 and R57. UMP is bound by residues D72 and 133–140 (TGNPFFTT). Positions 160, 166, and 169 each coordinate ATP.

This sequence belongs to the UMP kinase family. In terms of assembly, homohexamer.

It is found in the cytoplasm. It carries out the reaction UMP + ATP = UDP + ADP. It participates in pyrimidine metabolism; CTP biosynthesis via de novo pathway; UDP from UMP (UMPK route): step 1/1. With respect to regulation, inhibited by UTP. Its function is as follows. Catalyzes the reversible phosphorylation of UMP to UDP. This is Uridylate kinase from Ralstonia nicotianae (strain ATCC BAA-1114 / GMI1000) (Ralstonia solanacearum).